The chain runs to 206 residues: Putative cryptic phosphonate transport system permease protein PhnE1 (206 aa).

The next 3 membrane-spanning stretches (helical) occupy residues 30 to 50 (WFSLLSWAVVLAVLVVSWQGA), 92 to 112 (IAVWGTALAVVLSIPFGLMSA), and 137 to 157 (MVFAMLFVVAVGLGPFAGVLA).

In terms of assembly, if the reading frame is restored, the complex is composed of two ATP-binding proteins (PhnC), two transmembrane proteins (PhnE) and a solute-binding protein (PhnD).

The protein resides in the cell inner membrane. In terms of biological role, N-terminal fragment of the PhnE protein, part of a phosphonate usage operon that is cryptic in K12 strains. Growth of K12 strains on phosphonate can be observed when it is used as the sole phosphorus source after a 60 hour lag period, suggesting the operon is activated. An intact PhnE in strain B is (AC A0A140NFA3). Part of the binding-protein-dependent transport system for phosphonates; probably responsible for the translocation of the substrate across the membrane. The sequence is that of Putative cryptic phosphonate transport system permease protein PhnE1 (phnE1) from Escherichia coli (strain K12).